A 143-amino-acid polypeptide reads, in one-letter code: Putative pre-16S rRNA nuclease (143 aa).

This sequence belongs to the YqgF nuclease family.

The protein localises to the cytoplasm. Its function is as follows. Could be a nuclease involved in processing of the 5'-end of pre-16S rRNA. The sequence is that of Putative pre-16S rRNA nuclease from Lactococcus lactis subsp. cremoris (strain SK11).